The following is a 117-amino-acid chain: Large ribosomal subunit protein bL20 (117 aa).

Belongs to the bacterial ribosomal protein bL20 family.

Functionally, binds directly to 23S ribosomal RNA and is necessary for the in vitro assembly process of the 50S ribosomal subunit. It is not involved in the protein synthesizing functions of that subunit. This Streptococcus suis (strain 05ZYH33) protein is Large ribosomal subunit protein bL20.